The sequence spans 100 residues: Urease subunit gamma (100 aa).

It belongs to the urease gamma subunit family. As to quaternary structure, heterotrimer of UreA (gamma), UreB (beta) and UreC (alpha) subunits. Three heterotrimers associate to form the active enzyme.

It localises to the cytoplasm. It carries out the reaction urea + 2 H2O + H(+) = hydrogencarbonate + 2 NH4(+). It functions in the pathway nitrogen metabolism; urea degradation; CO(2) and NH(3) from urea (urease route): step 1/1. This chain is Urease subunit gamma, found in Trichormus variabilis (strain ATCC 29413 / PCC 7937) (Anabaena variabilis).